Here is a 341-residue protein sequence, read N- to C-terminus: MKDRLISAVARPEDADVDTSLRPRLLAEYIGQEKVKETISVFIQAARGRGEPLDHVLLFGPPGLGKTTLANIIANEMGVSIRTTSGPAVERPGDLAAILTSLSQGDILFIDEIHRLSRTVEEVLYPAMEDYALDIVIGKGPGARSLRLELPRFTLVGATTRAGLLTSPLRDRFGVISRLEYYRPEDLVLIVNRSARILGIEITAEGAFEIARRSRGTPRVANRLLKRVRDYAQVRANGVITCEVAVEALKFLEVDPLGLDFADRRLLLTIIQKFGGGPVGLETIATAVNEEPETVEDVYEPYLIQLGMLARTPRGRVTTPLAFRHLGLEPAREETDQVSLW.

Residues 1–182 (MKDRLISAVA…FGVISRLEYY (182 aa)) form a large ATPase domain (RuvB-L) region. ATP is bound by residues L21, R22, G63, K66, T67, T68, 129–131 (EDY), R172, Y182, and R219. Mg(2+) is bound at residue T67. The small ATPAse domain (RuvB-S) stretch occupies residues 183-253 (RPEDLVLIVN…VAVEALKFLE (71 aa)). A head domain (RuvB-H) region spans residues 256 to 341 (PLGLDFADRR…REETDQVSLW (86 aa)). R311 and R316 together coordinate DNA.

The protein belongs to the RuvB family. As to quaternary structure, homohexamer. Forms an RuvA(8)-RuvB(12)-Holliday junction (HJ) complex. HJ DNA is sandwiched between 2 RuvA tetramers; dsDNA enters through RuvA and exits via RuvB. An RuvB hexamer assembles on each DNA strand where it exits the tetramer. Each RuvB hexamer is contacted by two RuvA subunits (via domain III) on 2 adjacent RuvB subunits; this complex drives branch migration. In the full resolvosome a probable DNA-RuvA(4)-RuvB(12)-RuvC(2) complex forms which resolves the HJ.

It localises to the cytoplasm. The enzyme catalyses ATP + H2O = ADP + phosphate + H(+). Its function is as follows. The RuvA-RuvB-RuvC complex processes Holliday junction (HJ) DNA during genetic recombination and DNA repair, while the RuvA-RuvB complex plays an important role in the rescue of blocked DNA replication forks via replication fork reversal (RFR). RuvA specifically binds to HJ cruciform DNA, conferring on it an open structure. The RuvB hexamer acts as an ATP-dependent pump, pulling dsDNA into and through the RuvAB complex. RuvB forms 2 homohexamers on either side of HJ DNA bound by 1 or 2 RuvA tetramers; 4 subunits per hexamer contact DNA at a time. Coordinated motions by a converter formed by DNA-disengaged RuvB subunits stimulates ATP hydrolysis and nucleotide exchange. Immobilization of the converter enables RuvB to convert the ATP-contained energy into a lever motion, pulling 2 nucleotides of DNA out of the RuvA tetramer per ATP hydrolyzed, thus driving DNA branch migration. The RuvB motors rotate together with the DNA substrate, which together with the progressing nucleotide cycle form the mechanistic basis for DNA recombination by continuous HJ branch migration. Branch migration allows RuvC to scan DNA until it finds its consensus sequence, where it cleaves and resolves cruciform DNA. The polypeptide is Holliday junction branch migration complex subunit RuvB (Pelotomaculum thermopropionicum (strain DSM 13744 / JCM 10971 / SI)).